The sequence spans 330 residues: Putative [LysW]-L-2-aminoadipate/[LysW]-L-glutamate phosphate reductase (330 aa).

10–13 (SGYI) provides a ligand contact to NADP(+). Cys-142 is a catalytic residue. Asn-297 serves as a coordination point for NADP(+).

It belongs to the NAGSA dehydrogenase family. Type 1 subfamily. LysY sub-subfamily.

The protein localises to the cytoplasm. It carries out the reaction [amino-group carrier protein]-C-terminal-N-(1-carboxy-5-oxopentan-1-yl)-L-glutamine + phosphate + NADP(+) = [amino-group carrier protein]-C-terminal-N-(1-carboxy-5-phosphooxy-5-oxopentan-1-yl)-L-glutamine + NADPH + H(+). The enzyme catalyses [amino-group carrier protein]-C-terminal-gamma-(L-glutamyl-5-semialdehyde)-L-glutamate + phosphate + NADP(+) = [amino-group carrier protein]-C-terminal-gamma-(5-phospho-L-glutamyl)-L-glutamate + NADPH + H(+). It participates in amino-acid biosynthesis; L-lysine biosynthesis via AAA pathway; L-lysine from L-alpha-aminoadipate (Thermus route): step 3/5. It functions in the pathway amino-acid biosynthesis; L-arginine biosynthesis. Its function is as follows. Involved in both the arginine and lysine biosynthetic pathways. The protein is Putative [LysW]-L-2-aminoadipate/[LysW]-L-glutamate phosphate reductase of Pyrococcus horikoshii (strain ATCC 700860 / DSM 12428 / JCM 9974 / NBRC 100139 / OT-3).